A 1365-amino-acid chain; its full sequence is Glucosyltransferase-S (1365 aa).

Residues 1–36 (MEKNLRYKLHKVKKQWVAIGVTTVTLSFLAGGQVVA) constitute a signal peptide (or 37). Polar residues-rich tracts occupy residues 80–89 (DQTATSQVSP) and 127–146 (RQSA…TSDQ). Disordered regions lie at residues 80 to 99 (DQTA…DNQV) and 127 to 152 (RQSA…HLET). 2 Cell wall-binding repeats span residues 146–166 (QPGH…NGQR) and 168–187 (KNYS…QTGE). Residues 200–1000 (QDNVPDSYQA…KPIDPSVKIT (801 aa)) are catalytic; approximate. Cell wall-binding repeat units lie at residues 1052–1071 (ANGF…NGQE), 1073–1092 (KNRF…DGKM), 1093–1112 (ATGK…NGKQ), 1113–1133 (LKEG…NGRT), 1136–1159 (NKGF…DGTI), 1160–1179 (AIGL…YGYQ), 1234–1253 (LTGE…NGVQ), 1278–1298 (GKGW…SGQV), 1299–1318 (LTGL…KGIQ), and 1343–1362 (RDRW…NGLA).

This sequence belongs to the glycosyl hydrolase 70 family.

The catalysed reaction is [(1-&gt;6)-alpha-D-glucosyl](n) + sucrose = [(1-&gt;6)-alpha-D-glucosyl](n+1) + D-fructose. With respect to regulation, glucan synthesis by GTF-S is independent of primer glucan unlike GTF-I. Production of extracellular glucans, that are thought to play a key role in the development of the dental plaque because of their ability to adhere to smooth surfaces and mediate the aggregation of bacterial cells and food debris. The protein is Glucosyltransferase-S (gtfS) of Streptococcus downei (Streptococcus sobrinus).